A 56-amino-acid polypeptide reads, in one-letter code: Large ribosomal subunit protein bL33B (56 aa).

It belongs to the bacterial ribosomal protein bL33 family.

This is Large ribosomal subunit protein bL33B from Cutibacterium acnes (strain DSM 16379 / KPA171202) (Propionibacterium acnes).